The chain runs to 875 residues: Phosphoenolpyruvate carboxylase (875 aa).

Residues His-137 and Lys-542 contribute to the active site.

This sequence belongs to the PEPCase type 1 family. Mg(2+) is required as a cofactor.

The enzyme catalyses oxaloacetate + phosphate = phosphoenolpyruvate + hydrogencarbonate. In terms of biological role, forms oxaloacetate, a four-carbon dicarboxylic acid source for the tricarboxylic acid cycle. This Pseudomonas putida (strain ATCC 700007 / DSM 6899 / JCM 31910 / BCRC 17059 / LMG 24140 / F1) protein is Phosphoenolpyruvate carboxylase.